The following is a 515-amino-acid chain: Membrane-bound transcription factor site-2 protease (515 aa).

At 1–3 (MIP) the chain is on the cytoplasmic side. The chain crosses the membrane as a helical span at residues 4–24 (VSLLVVVVGGWTAVYLADLVL). At 25 to 74 (KSSVYFKHSYEDWLENNGLSISPFHIRWQTSIFNRAFYSWGRRKARMLYQ) the chain is on the lumenal side. The next 2 helical transmembrane spans lie at 75–95 (WFNF…FLLG) and 96–107 (KTLMQTLAQMMA). The Lumenal portion of the chain corresponds to 108 to 140 (DSPSPYSSSSSSSSSSSSSSSSSSSLHNEQVLQ). A helical membrane pass occupies residues 141–165 (VVVPGINLPVNQLTYFFAAVLISGV). His-167 serves as a coordination point for Zn(2+). Glu-168 is an active-site residue. Transmembrane regions (helical) follow at residues 170–182 (GHGI…QVRF), 183–205 (NGFG…TTHL), and 225–247 (FVLA…PFYY). His-171 lines the Zn(2+) pocket. The Lumenal portion of the chain corresponds to 248–442 (TGVGVLITEV…LPVIVETFVK (195 aa)). N-linked (GlcNAc...) asparagine glycosylation is present at Asn-333. A run of 2 helical transmembrane segments spans residues 443-460 (YLIS…VPCF) and 461-472 (ALDGQWILNSFL). At 473–488 (DATLTSVIGDNDVKDL) the chain is on the lumenal side. A helical transmembrane segment spans residues 489–509 (IGFFILLGGSVLLAANVTLGL). At 510–515 (WMVTAR) the chain is on the cytoplasmic side.

This sequence belongs to the peptidase M50A family. Requires Zn(2+) as cofactor.

The protein localises to the membrane. The protein resides in the cytoplasm. It localises to the golgi apparatus membrane. The catalysed reaction is Cleaves several transcription factors that are type-2 transmembrane proteins within membrane-spanning domains. Known substrates include sterol regulatory element-binding protein (SREBP) -1, SREBP-2 and forms of the transcriptional activator ATF6. SREBP-2 is cleaved at the site 477-DRSRILL-|-CVLTFLCLSFNPLTSLLQWGGA-505. The residues Asn-Pro, 11 residues distal to the site of cleavage in the membrane-spanning domain, are important for cleavage by S2P endopeptidase. Replacement of either of these residues does not prevent cleavage, but there is no cleavage if both of these residues are replaced.. In terms of biological role, zinc metalloprotease that mediates intramembrane proteolysis of proteins such as ATF6, ATF6B, SREBF1/SREBP1 and SREBF2/SREBP2. Catalyzes the second step in the proteolytic activation of the sterol regulatory element-binding proteins (SREBPs) SREBF1/SREBP1 and SREBF2/SREBP2: cleaves SREBPs within the first transmembrane segment, thereby releasing the N-terminal segment with a portion of the transmembrane segment attached. Mature N-terminal SREBP fragments shuttle to the nucleus and activate gene transcription. Also mediates the second step in the proteolytic activation of the cyclic AMP-dependent transcription factor ATF-6 (ATF6 and ATF6B). Involved in intramembrane proteolysis during bone formation. In astrocytes and osteoblasts, upon DNA damage and ER stress, mediates the second step of the regulated intramembrane proteolytic activation of the transcription factor CREB3L1, leading to the inhibition of cell-cycle progression. The protein is Membrane-bound transcription factor site-2 protease (Mbtps2) of Mus musculus (Mouse).